A 61-amino-acid chain; its full sequence is Sperm protamine P1 (61 aa).

Residues 1 to 61 (MARYRRRSRS…RRYSRRGRRR (61 aa)) are disordered.

This sequence belongs to the protamine P1 family. In terms of tissue distribution, testis.

It localises to the nucleus. The protein resides in the chromosome. Functionally, protamines substitute for histones in the chromatin of sperm during the haploid phase of spermatogenesis. They compact sperm DNA into a highly condensed, stable and inactive complex. In Dasyurus hallucatus (Northern quoll), this protein is Sperm protamine P1 (PRM1).